Here is a 211-residue protein sequence, read N- to C-terminus: Mediator-associated protein 2 (211 aa).

A disordered region spans residues 128–211; the sequence is QQKLVGSVTN…KSKKKVKKEE (84 aa). Residues 134–148 show a composition bias toward low complexity; the sequence is SVTNSSKKSSNLTQS. Phosphoserine is present on serine 173. The span at 189 to 198 shows a compositional bias: low complexity; that stretch reads STSTVSGSSE. The span at 202 to 211 shows a compositional bias: basic residues; sequence KSKKKVKKEE.

In terms of assembly, associated with the Mediator complex.

It localises to the nucleus. This is Mediator-associated protein 2 from Arabidopsis thaliana (Mouse-ear cress).